The chain runs to 596 residues: UvrABC system protein C (596 aa).

The region spanning 14-91 (QQPGCYLMKD…IKKYDPRYNV (78 aa)) is the GIY-YIG domain. Residues 196–231 (KDIRKNLAGEMQKASEALNFERAKEIRDTIQHIDAT) enclose the UVR domain.

The protein belongs to the UvrC family. Interacts with UvrB in an incision complex.

The protein resides in the cytoplasm. The UvrABC repair system catalyzes the recognition and processing of DNA lesions. UvrC both incises the 5' and 3' sides of the lesion. The N-terminal half is responsible for the 3' incision and the C-terminal half is responsible for the 5' incision. The protein is UvrABC system protein C of Oceanobacillus iheyensis (strain DSM 14371 / CIP 107618 / JCM 11309 / KCTC 3954 / HTE831).